A 42-amino-acid chain; its full sequence is Thymosin beta-10 (42 aa).

2 stretches are compositionally biased toward basic and acidic residues: residues 1 to 25 and 33 to 42; these read MADK…ETQE and ETIEQEKQAK. The disordered stretch occupies residues 1-42; the sequence is MADKPDLGEINSFDKAKLKKTETQEKNTLPTKETIEQEKQAK. Ala2 is modified (N-acetylalanine). At Lys4 the chain carries N6-acetyllysine. Phosphoserine is present on Ser12. Lys15 carries the N6-acetyllysine modification. A phosphothreonine mark is found at Thr21, Thr23, and Thr34. Lys39 carries the post-translational modification N6-acetyllysine.

Belongs to the thymosin beta family. In terms of tissue distribution, distributed in numerous types of tissues, including thymus, spleen, lung, liver and muscle.

The protein resides in the cytoplasm. It is found in the cytoskeleton. Its function is as follows. Plays an important role in the organization of the cytoskeleton. Binds to and sequesters actin monomers (G actin) and therefore inhibits actin polymerization. This Bos taurus (Bovine) protein is Thymosin beta-10 (TMSB10).